The following is a 610-amino-acid chain: UvrABC system protein C (610 aa).

Residues 16-94 (SQPGVYRMYD…IKLYQPRYNV (79 aa)) form the GIY-YIG domain. The UVR domain maps to 204-239 (DQVLTQLIARMEKASQDLAFEEAARIRDQIQAVRRV).

Belongs to the UvrC family. As to quaternary structure, interacts with UvrB in an incision complex.

It localises to the cytoplasm. In terms of biological role, the UvrABC repair system catalyzes the recognition and processing of DNA lesions. UvrC both incises the 5' and 3' sides of the lesion. The N-terminal half is responsible for the 3' incision and the C-terminal half is responsible for the 5' incision. The sequence is that of UvrABC system protein C from Salmonella enteritidis PT4 (strain P125109).